Reading from the N-terminus, the 344-residue chain is Phenylalanine--tRNA ligase alpha subunit (344 aa).

E255 is a binding site for Mg(2+).

Belongs to the class-II aminoacyl-tRNA synthetase family. Phe-tRNA synthetase alpha subunit type 1 subfamily. Tetramer of two alpha and two beta subunits. It depends on Mg(2+) as a cofactor.

The protein resides in the cytoplasm. It carries out the reaction tRNA(Phe) + L-phenylalanine + ATP = L-phenylalanyl-tRNA(Phe) + AMP + diphosphate + H(+). This chain is Phenylalanine--tRNA ligase alpha subunit, found in Phocaeicola vulgatus (strain ATCC 8482 / DSM 1447 / JCM 5826 / CCUG 4940 / NBRC 14291 / NCTC 11154) (Bacteroides vulgatus).